Here is a 161-residue protein sequence, read N- to C-terminus: Putative outer membrane protein YedS (161 aa).

A signal peptide spans M1–A21.

The protein belongs to the Gram-negative porin family.

Its subcellular location is the cell outer membrane. The protein is Putative outer membrane protein YedS (yedS) of Escherichia coli (strain K12).